A 266-amino-acid polypeptide reads, in one-letter code: Protein PAE0875 (266 aa).

This sequence belongs to the CinA family.

This chain is Protein PAE0875, found in Pyrobaculum aerophilum (strain ATCC 51768 / DSM 7523 / JCM 9630 / CIP 104966 / NBRC 100827 / IM2).